The following is a 370-amino-acid chain: UDP-3-O-acylglucosamine N-acyltransferase (370 aa).

The active-site Proton acceptor is the His-252. Residues 350–370 form a disordered region; that stretch reads AAGRQDGPAANAASSSAGDKA. Over residues 358–370 the composition is skewed to low complexity; sequence AANAASSSAGDKA.

This sequence belongs to the transferase hexapeptide repeat family. LpxD subfamily. Homotrimer.

The enzyme catalyses a UDP-3-O-[(3R)-3-hydroxyacyl]-alpha-D-glucosamine + a (3R)-hydroxyacyl-[ACP] = a UDP-2-N,3-O-bis[(3R)-3-hydroxyacyl]-alpha-D-glucosamine + holo-[ACP] + H(+). It functions in the pathway bacterial outer membrane biogenesis; LPS lipid A biosynthesis. Functionally, catalyzes the N-acylation of UDP-3-O-acylglucosamine using 3-hydroxyacyl-ACP as the acyl donor. Is involved in the biosynthesis of lipid A, a phosphorylated glycolipid that anchors the lipopolysaccharide to the outer membrane of the cell. This chain is UDP-3-O-acylglucosamine N-acyltransferase, found in Paraburkholderia xenovorans (strain LB400).